A 67-amino-acid polypeptide reads, in one-letter code: Beta-defensin 123 (67 aa).

An N-terminal signal peptide occupies residues 1 to 20 (MKLLLLTLTVLLLLSQLTPG). 3 disulfides stabilise this stretch: cysteine 25–cysteine 52, cysteine 32–cysteine 46, and cysteine 36–cysteine 53.

Belongs to the beta-defensin family.

Its subcellular location is the secreted. Functionally, has antibacterial activity. This Pongo pygmaeus (Bornean orangutan) protein is Beta-defensin 123 (DEFB123).